Consider the following 546-residue polypeptide: Phosphomethylpyrimidine synthase (546 aa).

The span at 1–19 (MSTPSSRSQAPETVTTGPI) shows a compositional bias: polar residues. The tract at residues 1 to 20 (MSTPSSRSQAPETVTTGPIQ) is disordered. Residues asparagine 146, methionine 175, tyrosine 204, histidine 240, 260-262 (SRG), 301-304 (DGLR), and glutamate 340 contribute to the substrate site. Histidine 344 serves as a coordination point for Zn(2+). Residue tyrosine 367 participates in substrate binding. Histidine 408 is a Zn(2+) binding site. 3 residues coordinate [4Fe-4S] cluster: cysteine 488, cysteine 491, and cysteine 496.

Belongs to the ThiC family. It depends on [4Fe-4S] cluster as a cofactor.

The enzyme catalyses 5-amino-1-(5-phospho-beta-D-ribosyl)imidazole + S-adenosyl-L-methionine = 4-amino-2-methyl-5-(phosphooxymethyl)pyrimidine + CO + 5'-deoxyadenosine + formate + L-methionine + 3 H(+). It functions in the pathway cofactor biosynthesis; thiamine diphosphate biosynthesis. Catalyzes the synthesis of the hydroxymethylpyrimidine phosphate (HMP-P) moiety of thiamine from aminoimidazole ribotide (AIR) in a radical S-adenosyl-L-methionine (SAM)-dependent reaction. The protein is Phosphomethylpyrimidine synthase of Mycobacteroides abscessus (strain ATCC 19977 / DSM 44196 / CCUG 20993 / CIP 104536 / JCM 13569 / NCTC 13031 / TMC 1543 / L948) (Mycobacterium abscessus).